We begin with the raw amino-acid sequence, 64 residues long: Small ribosomal subunit protein eS17 (64 aa).

Belongs to the eukaryotic ribosomal protein eS17 family.

In Methanosarcina mazei (strain ATCC BAA-159 / DSM 3647 / Goe1 / Go1 / JCM 11833 / OCM 88) (Methanosarcina frisia), this protein is Small ribosomal subunit protein eS17.